Here is a 571-residue protein sequence, read N- to C-terminus: Proline--tRNA ligase (571 aa).

Belongs to the class-II aminoacyl-tRNA synthetase family. ProS type 1 subfamily. Homodimer.

The protein localises to the cytoplasm. The enzyme catalyses tRNA(Pro) + L-proline + ATP = L-prolyl-tRNA(Pro) + AMP + diphosphate. In terms of biological role, catalyzes the attachment of proline to tRNA(Pro) in a two-step reaction: proline is first activated by ATP to form Pro-AMP and then transferred to the acceptor end of tRNA(Pro). As ProRS can inadvertently accommodate and process non-cognate amino acids such as alanine and cysteine, to avoid such errors it has two additional distinct editing activities against alanine. One activity is designated as 'pretransfer' editing and involves the tRNA(Pro)-independent hydrolysis of activated Ala-AMP. The other activity is designated 'posttransfer' editing and involves deacylation of mischarged Ala-tRNA(Pro). The misacylated Cys-tRNA(Pro) is not edited by ProRS. This Acinetobacter baumannii (strain ATCC 17978 / DSM 105126 / CIP 53.77 / LMG 1025 / NCDC KC755 / 5377) protein is Proline--tRNA ligase.